Consider the following 398-residue polypeptide: MIITSLLDTDLYKFTMMQVVLHQFPGAQVEYRFKCRNPGVELAPFVSEIRDEIRALCSLQFQDAELAYLRSLRFIKSDFVDFLGLFRLNEKYIRVSALPSGEIDITITGPWLHTILFEIPVLAIVNEVYFRNTQKVPDFPEGRRRLEAKIGQLQQPGLDSLKIADYGTRRRFSRAWHEEVLRVLCVRLGSDDRRGAPGQFAGTSNVLYAMKLGVTPLGTMAHEYLQACQSLGPRLRDSQVFGFEMWAKEYRGDLGIALSDVYGMSAFLRDFDLYFCKLFDGARHDSGDPFAWGERLLQHYRDNRVDPLTKTLIFSDALTVPRIIELYQRFNGRCQLAFGIGTNLTNDLGYEPLQIVIKMTRCNGQPVAKLSDAPGKNMCNDEKYLAYLRQVFEIPSPQ.

His-222 carries the phosphohistidine; by autocatalysis modification.

The protein belongs to the NAPRTase family. Transiently phosphorylated on a His residue during the reaction cycle. Phosphorylation strongly increases the affinity for substrates and increases the rate of nicotinate D-ribonucleotide production. Dephosphorylation regenerates the low-affinity form of the enzyme, leading to product release.

The catalysed reaction is nicotinate + 5-phospho-alpha-D-ribose 1-diphosphate + ATP + H2O = nicotinate beta-D-ribonucleotide + ADP + phosphate + diphosphate. It functions in the pathway cofactor biosynthesis; NAD(+) biosynthesis; nicotinate D-ribonucleotide from nicotinate: step 1/1. Functionally, catalyzes the synthesis of beta-nicotinate D-ribonucleotide from nicotinate and 5-phospho-D-ribose 1-phosphate at the expense of ATP. The sequence is that of Nicotinate phosphoribosyltransferase from Acidovorax ebreus (strain TPSY) (Diaphorobacter sp. (strain TPSY)).